The primary structure comprises 385 residues: cAMP-dependent protein kinase, catalytic subunit-like (385 aa).

The 255-residue stretch at 63–317 folds into the Protein kinase domain; the sequence is LERIVTIGKG…TQDVKDHKWF (255 aa). Residues 69-77 and K92 each bind ATP; that span reads IGKGTFGRV. D186 (proton acceptor) is an active-site residue. Positions 318–385 constitute an AGC-kinase C-terminal domain; it reads EKVNWDDTLH…QRERDLFAEW (68 aa).

Belongs to the protein kinase superfamily. Ser/Thr protein kinase family. cAMP subfamily.

It catalyses the reaction L-seryl-[protein] + ATP = O-phospho-L-seryl-[protein] + ADP + H(+). It carries out the reaction L-threonyl-[protein] + ATP = O-phospho-L-threonyl-[protein] + ADP + H(+). The sequence is that of cAMP-dependent protein kinase, catalytic subunit-like from Caenorhabditis briggsae.